The sequence spans 488 residues: Receptor-like tyrosine-protein kinase kin-15 (488 aa).

The N-terminal stretch at 1–26 (MCLKMRYERIKYILLFSLMHLVYSNS) is a signal peptide. Asn-25 carries an N-linked (GlcNAc...) asparagine glycan. The Extracellular portion of the chain corresponds to 27 to 50 (TFESFTENPHISSQISNVLYMDQM). A helical membrane pass occupies residues 51-70 (FIIYILICILLILISVIVYL). Over 71 to 488 (SKRYSQQMMQ…SKLEDWIRRD (418 aa)) the chain is Cytoplasmic. In terms of domain architecture, Protein kinase spans 144-458 (EISEDKLGSG…VEFFEEHLSV (315 aa)). ATP contacts are provided by residues 150-158 (LGSGFFGEV) and Lys-183. Catalysis depends on Asp-319, which acts as the Proton acceptor.

The protein belongs to the protein kinase superfamily. Tyr protein kinase family. In terms of tissue distribution, hypodermal cells.

It localises to the cell membrane. The enzyme catalyses L-tyrosyl-[protein] + ATP = O-phospho-L-tyrosyl-[protein] + ADP + H(+). Its function is as follows. May be specifically involved in cell-cell interactions regulating cell fusions that generate the hypodermis during postembryonic development. It has a role in the development of the HYP7 hypodermal syncytium. The protein is Receptor-like tyrosine-protein kinase kin-15 (kin-15) of Caenorhabditis elegans.